The sequence spans 178 residues: Cytochrome b6-f complex subunit 4 (178 aa).

A run of 3 helical transmembrane segments spans residues 36-56 (LSYI…GLAV), 95-115 (LLGV…PFLE), and 131-151 (TVSL…ALPI).

The protein belongs to the cytochrome b family. PetD subfamily. As to quaternary structure, the 4 large subunits of the cytochrome b6-f complex are cytochrome b6, subunit IV (17 kDa polypeptide, petD), cytochrome f and the Rieske protein, while the 4 small subunits are petG, petL, petM and petN. The complex functions as a dimer.

It is found in the plastid. The protein resides in the chloroplast thylakoid membrane. Functionally, component of the cytochrome b6-f complex, which mediates electron transfer between photosystem II (PSII) and photosystem I (PSI), cyclic electron flow around PSI, and state transitions. The sequence is that of Cytochrome b6-f complex subunit 4 from Picea abies (Norway spruce).